The following is a 504-amino-acid chain: Maturase K (504 aa).

It belongs to the intron maturase 2 family. MatK subfamily.

Its subcellular location is the plastid. It is found in the chloroplast. Functionally, usually encoded in the trnK tRNA gene intron. Probably assists in splicing its own and other chloroplast group II introns. This chain is Maturase K, found in Rorippa amphibia (Great yellow-cress).